Consider the following 289-residue polypeptide: Ribosomal protein L11 methyltransferase (289 aa).

The S-adenosyl-L-methionine site is built by threonine 142, glycine 163, aspartate 185, and asparagine 226.

The protein belongs to the methyltransferase superfamily. PrmA family.

Its subcellular location is the cytoplasm. The enzyme catalyses L-lysyl-[protein] + 3 S-adenosyl-L-methionine = N(6),N(6),N(6)-trimethyl-L-lysyl-[protein] + 3 S-adenosyl-L-homocysteine + 3 H(+). Its function is as follows. Methylates ribosomal protein L11. This is Ribosomal protein L11 methyltransferase from Legionella pneumophila (strain Lens).